Here is a 1394-residue protein sequence, read N- to C-terminus: MKKTVFRLNFLTACISLGIVSQAWAGHTYFGIDYQYYRDFAENKGKFTVGAQNIKVYNKQGQLVGTSMTKAPMIDFSVVSRNGVAALVENQYIVSVAHNVGYTDVDFGAEGNNPDQHRFTYKIVKRNNYKKDNLHPYEDDYHNPRLHKFVTEAAPIDMTSNMNGSTYSDRTKYPERVRIGSGRQFWRNDQDKGDQVAGAYHYLTAGNTHNQRGAGNGYSYLGGDVRKAGEYGPLPIAGSKGDSGSPMFIYDAEKQKWLINGILREGNPFEGKENGFQLVRKSYFDEIFERDLHTSLYTRAGNGVYTISGNDNGQGSITQKSGIPSEIKITLANMSLPLKEKDKVHNPRYDGPNIYSPRLNNGETLYFMDQKQGSLIFASDINQGAGGLYFEGNFTVSPNSNQTWQGAGIHVSENSTVTWKVNGVEHDRLSKIGKGTLHVQAKGENKGSISVGDGKVILEQQADDQGNKQAFSEIGLVSGRGTVQLNDDKQFDTDKFYFGFRGGRLDLNGHSLTFKRIQNTDEGAMIVNHNTTQAANVTITGNESIVLPNGNNINKLDYRKEIAYNGWFGETDKNKHNGRLNLIYKPTTEDRTLLLSGGTNLKGDITQTKGKLFFSGRPTPHAYNHLNKRWSEMEGIPQGEIVWDHDWINRTFKAENFQIKGGSAVVSRNVSSIEGNWTVSNNANATFGVVPNQQNTICTRSDWTGLTTCQKVDLTDTKVINSIPKTQINGSINLTDNATANVKGLAKLNGNVTLTNHSQFTLSNNATQIGNIRLSDNSTATVDNANLNGNVHLTDSAQFSLKNSHFSHQIQGDKGTTVTLENATWTMPSDTTLQNLTLNNSTITLNSAYSASSNNTPRRRSLETETTPTSAEHRFNTLTVNGKLSGQGTFQFTSSLFGYKSDKLKLSNDAEGDYILSVRNTGKEPETLEQLTLVESKDNQPLSDKLKFTLENDHVDAGALRYKLVKNDGEFRLHNPIKEQELHNDLVRAEQAERTLEAKQVEPTAKTQTGEPKVRSRRAARAAFPDTLPDQSLLNALEAKQAELTAETQKSKAKTKKVRSKRAVFSDPLLDQSLFALEAALEVIDAPQQSEKDRLAQEEAEKQRKQKDLISRYSNSALSELSATVNSMLSVQDELDRLFVDQAQSAVWTNIAQDKRRYDSDAFRAYQQQKTNLRQIGVQKALANGRIGAVFSHSRSDNTFDEQVKNHATLTMMSGFAQYQWGDLQFGVNVGTGISASKMAEEQSRKIHRKAINYGVNASYQFRLGQLGIQPYFGVNRYFIERENYQSEEVRVKTPSLAFNRYNAGIRVDYTFTPTDNISVKPYFFVNYVDVSNANVQTTVNLTVLQQPFGRYWQKEVGLKAEILHFQISAFISKSQGSQLGKQQNVGVKLGYRW.

The N-terminal stretch at 1-25 (MKKTVFRLNFLTACISLGIVSQAWA) is a signal peptide. Positions 26–286 (GHTYFGIDYQ…QLVRKSYFDE (261 aa)) constitute a Peptidase S6 domain. Ser-243 is a catalytic residue. Disordered stretches follow at residues 848–870 (AYSA…TPTS) and 995–1027 (TLEA…FPDT). An Autotransporter domain is found at 1140–1394 (VDQAQSAVWT…NVGVKLGYRW (255 aa)).

The protein localises to the periplasm. The protein resides in the secreted. Its subcellular location is the cell surface. It is found in the cell outer membrane. In terms of biological role, probable protease; promotes adherence and invasion by directly binding to a host cell structure. The protein is Adhesion and penetration protein autotransporter (hap) of Haemophilus influenzae.